A 1227-amino-acid polypeptide reads, in one-letter code: MDLEAKEISGNIPNENALAELCRLCESADLSQIENFVGRYKNWCLSIIWPRNCWLRFTPRKDVAGYTEKMFEDMDDHYQGFVEKLCLLGTIQIPYRDVPILIGRSKRIFLHDLETDTLHFVCDNFEQFVRYGVLGTNIITCAEPVYRHGLYEGPRFESLENLMNNDVLRSPYTLNVHVKLNRKGVLGIKAMRKHYIAMLREFDELARCASLDDVGRFVSLNVGRDLRLDMPVFKSLTLGTRDSVWTGTCRLANLKEQEDLVEKVVVLGYLNDHDYESKCTRPILCIGKSGKIYYYDWIDNVLVKLGDCLLTFLRVGFARLFADYGYEKIGKISMRFGRMSTLGMSETYQSCMSLKIVPVCNDEFALSSCVPTLDFDVDVLSAAYGDGLEISSPGLRCCIAWPPMYALTLGEFYHFHTHRWVSAYDWSSLLDADEFMSAVGYAHPIYRDPNPDYDPYVMHTSTGKTIAVDTVTEKVYIIAESLVQFFNIGLRQFPPFAEAELDPEQEKMWFGETKCGREEFILLQRNLPAMKDYVAKHSGKRIRVDAFQDFDFSFCSLSDIYYLTGPGILEKITEKDYAIIGTCARSQAEPNCRAAIVMGSNCHIYIYVENKISKVSKSLRTFIRRGFDELLYKEKYSLDWSDDTLFYISDTETENLNRMLNGELPVLRSKPRHMCVRKDRLVKDRSKILFAVRLDEEDSPTVKFITKFLTPVFVGRLPATNRFVVPVSRARLTNGLQGTAAARFGIKGLHPSSDCLVWNILVDYEYETYKYPSTYIRADQIADMVKDLKFMDNFNEKWQCITKLAFLGLYAGASLFNFTSKPTLGYWCRYLSEYASMLLFQFESKLKELTKESTRQLGGYNLCHWGQELKDCLENKSDVFFRYDFFERIESCLIEHFMLLCGCVECRRMFIMYNKRGRKFDFGHSVRIQCFPMIGSIRLPAFLHLGEPYDVSLSSLIAKDLGLSMIEGQIELSRLPISLQISVTPDKKALLTFLTNIVFIVFVVNTLYRVINAELDIYYDLFTEEVGKLCVAMEEEMKLGRNGCLGDLCYFSPMKQMKEIVRCPGEKSQFILKCWEALRIGFSVPAYKDYDETPFMEMFFMHHLHIKRFHEDNDRDLVSCDNLIPGFFIVNTDGENFLQRLQRVVLPVVEDYLTNTRCINGTMAFFFSGLKYFGSGNHRGFQISPEKDVRAIAYKLGSLDVLRDDYKYYEYTPPDCPGELNGHGGDE.

This sequence belongs to the herpesviridae US22 family.

In Homo sapiens (Human), this protein is Protein U7 (U7/U5).